Here is a 570-residue protein sequence, read N- to C-terminus: MNVEEIAFKYALANAVKYGGKADVKAVMAKLMAEVPELRARAREVKQIVDAVVARVNSMPLEEQRRILRERWPELLEERRAEQRRPGLEGLPELPNVRGGVVVRFAPNPDFVLHLGSARPAILNYAYRIKYGGKFILRFEDTDPRIKSPLVTEEVNAYESIREDLRWLGVRWDEEYIQSQRMEIYYEHAKKLLEMGAAYVDLCKPEEWRRLRNEKKACPHREQPPEVNLELWDKMLEGRFKEGEAVLRIKTDLTHPDPSVRDWVAFRIIDTSKTPHPLTGDKYIVWPTYNFAVSIDDHLMGVTHVLRAQEHSVNTIKQSYVFRHFGWEQPVTIHFGRLRIEGATLSKSKLKAMRIKYDDLTLPTLAGLRNRGIVPEAIWDLILSVGIKPSDSTVALANLFAFNRKHIEPIADRYMYVADPVKLVFEADKELTAHVPFHPSFKERGERTYRLGPGRVEVYIQRRDAVAGKVVRLMELANVEIVRVEGDVAYGRIHSYSLDEAKKIGAPIIQWVWDPVEITVIKPAGVGRKEVEVGLGEGWLERVEVGKYVQFFRYGYLKKRGPREFVFLHD.

The short motif at proline 107–serine 117 is the 'HIGH' region element.

Belongs to the class-I aminoacyl-tRNA synthetase family. Glutamate--tRNA ligase type 2 subfamily.

The protein resides in the cytoplasm. It carries out the reaction tRNA(Glu) + L-glutamate + ATP = L-glutamyl-tRNA(Glu) + AMP + diphosphate. Functionally, catalyzes the attachment of glutamate to tRNA(Glu) in a two-step reaction: glutamate is first activated by ATP to form Glu-AMP and then transferred to the acceptor end of tRNA(Glu). The polypeptide is Glutamate--tRNA ligase (Pyrobaculum aerophilum (strain ATCC 51768 / DSM 7523 / JCM 9630 / CIP 104966 / NBRC 100827 / IM2)).